We begin with the raw amino-acid sequence, 376 residues long: 26S proteasome non-ATPase regulatory subunit 13 (376 aa).

A PCI domain is found at 171 to 338; sequence SYYKDALRFL…KRVHMTWVQP (168 aa).

Component of the 19S proteasome regulatory particle complex. The 26S proteasome consists of a 20S core particle (CP) and two 19S regulatory subunits (RP). The regulatory particle is made of a lid composed of 9 subunits including PSMD13, a base containing 6 ATPases and few additional components.

In terms of biological role, component of the 26S proteasome, a multiprotein complex involved in the ATP-dependent degradation of ubiquitinated proteins. This complex plays a key role in the maintenance of protein homeostasis by removing misfolded or damaged proteins, which could impair cellular functions, and by removing proteins whose functions are no longer required. Therefore, the proteasome participates in numerous cellular processes, including cell cycle progression, apoptosis, or DNA damage repair. In Gallus gallus (Chicken), this protein is 26S proteasome non-ATPase regulatory subunit 13.